The following is a 697-amino-acid chain: Long-chain-fatty-acid--CoA ligase 6 (697 aa).

Residues 25–45 (LSATTLVSMGALAAILAYWFT) form a helical; Signal-anchor for type III membrane protein membrane-spanning segment. Topologically, residues 46–697 (HRPKALQPPC…QIEELYSISM (652 aa)) are cytoplasmic.

Belongs to the ATP-dependent AMP-binding enzyme family. Mg(2+) serves as cofactor. Expressed predominantly in erythrocyte precursors, in particular in reticulocytes, fetal blood cells derived from fetal liver, hemopoietic stem cells from cord blood, bone marrow and brain.

The protein localises to the mitochondrion outer membrane. Its subcellular location is the peroxisome membrane. It is found in the microsome membrane. The protein resides in the endoplasmic reticulum membrane. It carries out the reaction a long-chain fatty acid + ATP + CoA = a long-chain fatty acyl-CoA + AMP + diphosphate. It catalyses the reaction (5Z,8Z,11Z,14Z)-eicosatetraenoate + ATP + CoA = (5Z,8Z,11Z,14Z)-eicosatetraenoyl-CoA + AMP + diphosphate. The catalysed reaction is hexadecanoate + ATP + CoA = hexadecanoyl-CoA + AMP + diphosphate. The enzyme catalyses (E)-hexadec-2-enoate + ATP + CoA = (2E)-hexadecenoyl-CoA + AMP + diphosphate. It carries out the reaction 15-hydroxy-(5Z,8Z,11Z,13E)-eicosatetraenoate + ATP + CoA = 15-hydroxy-(5Z,8Z,11Z,13E)-eicosatetraenoyl-CoA + AMP + diphosphate. It catalyses the reaction 12-hydroxy-(5Z,8Z,10E,14Z)-eicosatetraenoate + ATP + CoA = 12-hydroxy-(5Z,8Z,10E,14Z)-eicosatetraenoyl-CoA + AMP + diphosphate. The catalysed reaction is 5-hydroxy-(6E,8Z,11Z,14Z)-eicosatetraenoate + ATP + CoA = 5-hydroxy-(6E,8Z,11Z,14Z)-eicosatetraenoyl-CoA + AMP + diphosphate. Its function is as follows. Catalyzes the conversion of long-chain fatty acids to their active form acyl-CoA for both synthesis of cellular lipids, and degradation via beta-oxidation. Plays an important role in fatty acid metabolism in brain and the acyl-CoAs produced may be utilized exclusively for the synthesis of the brain lipid. The polypeptide is Long-chain-fatty-acid--CoA ligase 6 (Homo sapiens (Human)).